The chain runs to 372 residues: Glutamate 5-kinase (372 aa).

Lysine 14 provides a ligand contact to ATP. Substrate-binding residues include serine 54, aspartate 141, and asparagine 153. 173 to 174 (TD) serves as a coordination point for ATP. The PUA domain occupies 280 to 358 (RGTLVLDDGA…DAIEALLGYV (79 aa)).

Belongs to the glutamate 5-kinase family.

It localises to the cytoplasm. It catalyses the reaction L-glutamate + ATP = L-glutamyl 5-phosphate + ADP. The protein operates within amino-acid biosynthesis; L-proline biosynthesis; L-glutamate 5-semialdehyde from L-glutamate: step 1/2. Catalyzes the transfer of a phosphate group to glutamate to form L-glutamate 5-phosphate. The sequence is that of Glutamate 5-kinase from Pseudomonas paraeruginosa (strain DSM 24068 / PA7) (Pseudomonas aeruginosa (strain PA7)).